A 77-amino-acid polypeptide reads, in one-letter code: MGSLSIWHWILVIAVVLLLFGRGKISDLMGDVAQGIKAFKKGMQDDDKPADKPEPAKSIEHNAAPTAARSDVGSKAV.

A helical membrane pass occupies residues 1–21 (MGSLSIWHWILVIAVVLLLFG). Basic and acidic residues predominate over residues 42 to 60 (GMQDDDKPADKPEPAKSIE). A disordered region spans residues 42–77 (GMQDDDKPADKPEPAKSIEHNAAPTAARSDVGSKAV).

Belongs to the TatA/E family. In terms of assembly, the Tat system comprises two distinct complexes: a TatABC complex, containing multiple copies of TatA, TatB and TatC subunits, and a separate TatA complex, containing only TatA subunits. Substrates initially bind to the TatABC complex, which probably triggers association of the separate TatA complex to form the active translocon.

It is found in the cell inner membrane. Part of the twin-arginine translocation (Tat) system that transports large folded proteins containing a characteristic twin-arginine motif in their signal peptide across membranes. TatA could form the protein-conducting channel of the Tat system. The chain is Sec-independent protein translocase protein TatA from Bradyrhizobium diazoefficiens (strain JCM 10833 / BCRC 13528 / IAM 13628 / NBRC 14792 / USDA 110).